A 135-amino-acid polypeptide reads, in one-letter code: Peptide methionine sulfoxide reductase MsrB (135 aa).

Residues 9 to 131 (DDYWRSKLTD…NSASIQFEEE (123 aa)) form the MsrB domain. The Zn(2+) site is built by C48, C51, C97, and C100. Residue C120 is the Nucleophile of the active site.

Belongs to the MsrB Met sulfoxide reductase family. The cofactor is Zn(2+).

It catalyses the reaction L-methionyl-[protein] + [thioredoxin]-disulfide + H2O = L-methionyl-(R)-S-oxide-[protein] + [thioredoxin]-dithiol. This chain is Peptide methionine sulfoxide reductase MsrB, found in Teredinibacter turnerae (strain ATCC 39867 / T7901).